We begin with the raw amino-acid sequence, 758 residues long: 5-methyltetrahydropteroyltriglutamate--homocysteine methyltransferase (758 aa).

5-methyltetrahydropteroyltri-L-glutamate is bound by residues Arg17–Lys20 and Lys117. Residues Ile434 to Ser436 and Glu487 contribute to the L-homocysteine site. L-methionine contacts are provided by residues Ile434–Ser436 and Glu487. 5-methyltetrahydropteroyltri-L-glutamate is bound by residues Arg518 to Cys519 and Trp564. Asp602 is a binding site for L-homocysteine. Asp602 is a binding site for L-methionine. Position 608 (Glu608) interacts with 5-methyltetrahydropteroyltri-L-glutamate. Positions 644, 646, and 668 each coordinate Zn(2+). His697 acts as the Proton donor in catalysis. Residue Cys729 coordinates Zn(2+).

This sequence belongs to the vitamin-B12 independent methionine synthase family. It depends on Zn(2+) as a cofactor.

The enzyme catalyses 5-methyltetrahydropteroyltri-L-glutamate + L-homocysteine = tetrahydropteroyltri-L-glutamate + L-methionine. It participates in amino-acid biosynthesis; L-methionine biosynthesis via de novo pathway; L-methionine from L-homocysteine (MetE route): step 1/1. Its function is as follows. Catalyzes the transfer of a methyl group from 5-methyltetrahydrofolate to homocysteine resulting in methionine formation. This chain is 5-methyltetrahydropteroyltriglutamate--homocysteine methyltransferase, found in Yersinia pseudotuberculosis serotype I (strain IP32953).